The primary structure comprises 310 residues: HPr kinase/phosphorylase (310 aa).

Active-site residues include His138 and Lys159. Residue 153–160 (GASGIGKS) coordinates ATP. Ser160 provides a ligand contact to Mg(2+). Asp177 (proton acceptor; for phosphorylation activity. Proton donor; for dephosphorylation activity) is an active-site residue. Residues 201-210 (IEIRGVGIID) are important for the catalytic mechanism of both phosphorylation and dephosphorylation. Glu202 lines the Mg(2+) pocket. Residue Arg243 is part of the active site. The tract at residues 264 to 269 (PVKTGR) is important for the catalytic mechanism of dephosphorylation.

The protein belongs to the HPrK/P family. In terms of assembly, homohexamer. Mg(2+) serves as cofactor.

The catalysed reaction is [HPr protein]-L-serine + ATP = [HPr protein]-O-phospho-L-serine + ADP + H(+). The enzyme catalyses [HPr protein]-O-phospho-L-serine + phosphate + H(+) = [HPr protein]-L-serine + diphosphate. Its function is as follows. Catalyzes the ATP- as well as the pyrophosphate-dependent phosphorylation of a specific serine residue in HPr, a phosphocarrier protein of the phosphoenolpyruvate-dependent sugar phosphotransferase system (PTS). HprK/P also catalyzes the pyrophosphate-producing, inorganic phosphate-dependent dephosphorylation (phosphorolysis) of seryl-phosphorylated HPr (P-Ser-HPr). The two antagonistic activities of HprK/P are regulated by several intracellular metabolites, which change their concentration in response to the absence or presence of rapidly metabolisable carbon sources (glucose, fructose, etc.) in the growth medium. Therefore, by controlling the phosphorylation state of HPr, HPrK/P is a sensor enzyme that plays a major role in the regulation of carbon metabolism and sugar transport: it mediates carbon catabolite repression (CCR), and regulates PTS-catalyzed carbohydrate uptake and inducer exclusion. The protein is HPr kinase/phosphorylase of Lactococcus lactis subsp. cremoris (strain MG1363).